Reading from the N-terminus, the 122-residue chain is Large ribosomal subunit protein bL12 (122 aa).

It belongs to the bacterial ribosomal protein bL12 family. In terms of assembly, homodimer. Part of the ribosomal stalk of the 50S ribosomal subunit. Forms a multimeric L10(L12)X complex, where L10 forms an elongated spine to which 2 to 4 L12 dimers bind in a sequential fashion. Binds GTP-bound translation factors.

Its function is as follows. Forms part of the ribosomal stalk which helps the ribosome interact with GTP-bound translation factors. Is thus essential for accurate translation. The protein is Large ribosomal subunit protein bL12 of Shewanella woodyi (strain ATCC 51908 / MS32).